We begin with the raw amino-acid sequence, 405 residues long: NADH-quinone oxidoreductase subunit D (405 aa).

The protein belongs to the complex I 49 kDa subunit family. As to quaternary structure, NDH-1 is composed of 14 different subunits. Subunits NuoB, C, D, E, F, and G constitute the peripheral sector of the complex.

The protein resides in the cell inner membrane. It carries out the reaction a quinone + NADH + 5 H(+)(in) = a quinol + NAD(+) + 4 H(+)(out). In terms of biological role, NDH-1 shuttles electrons from NADH, via FMN and iron-sulfur (Fe-S) centers, to quinones in the respiratory chain. The immediate electron acceptor for the enzyme in this species is believed to be ubiquinone. Couples the redox reaction to proton translocation (for every two electrons transferred, four hydrogen ions are translocated across the cytoplasmic membrane), and thus conserves the redox energy in a proton gradient. The polypeptide is NADH-quinone oxidoreductase subunit D (Leptospira borgpetersenii serovar Hardjo-bovis (strain L550)).